Reading from the N-terminus, the 278-residue chain is MVNVIMKISSLKKGSNFSINIKNIKLDKKLLVAIIFLVLSILGGGAYLYYENEKTKKLEQARLQKIQKENSDKQTYLSDFKSAFEGLDYQALTGFYDVLRSDIDFFRVNNWLLDVMDCNVNCNLAFKRGSFDTFTYLEMNRNGAVIKPQFDQNKLQFANVDYISGFRSIYLKDLTEQERDKSENIIEQCSTKLSELYNLQLLMKEQVKFKINLPRNVTSISGYDWVKNSDIKFGSIEIENMPEKNLGLMKNIMNNSMMITSISLQNSSFKSKLNYYCY.

The helical transmembrane segment at 30 to 50 threads the bilayer; that stretch reads LLVAIIFLVLSILGGGAYLYY.

The protein resides in the cell membrane. In terms of biological role, involved in TCP pilus biogenesis. The sequence is that of Toxin coregulated pilus biosynthesis protein D (tcpD) from Vibrio cholerae serotype O1 (strain ATCC 39315 / El Tor Inaba N16961).